A 154-amino-acid chain; its full sequence is Protein SprT-like (154 aa).

The SprT-like domain occupies 6–144 (LQQLTETISL…CGTCHGKLKF (139 aa)). Residue His67 participates in Zn(2+) binding. Residue Glu68 is part of the active site. Residue His71 participates in Zn(2+) binding.

It belongs to the SprT family. The cofactor is Zn(2+).

The protein localises to the cytoplasm. The sequence is that of Protein SprT-like from Shouchella clausii (strain KSM-K16) (Alkalihalobacillus clausii).